The sequence spans 591 residues: ADP-ribosylating toxin CARDS (591 aa).

A mono-ADP ribosyltransferase (mART) domain region spans residues 1–205; it reads MPNPVRFVYR…LPTPGIATPV (205 aa). The interval 206–256 is NAD(+)-binding pocket; it reads HLSIPQAASVADVSEGTSASLSFACPDWSPPSSNGENPLDKCIAEKIDNYN. A disulfide bridge links C230 with C247. The KELED motif, involved in host ER trafficking, solvent exposed in the crystal structure signature appears at 268–272; that stretch reads KELED. Residues 273–439 are D2 domain; sequence TPVYLRGIKT…QFVTMRAAST (167 aa). The segment at 440-591 is D3 domain; the sequence is FFVDVQLGWY…ILVKDGFDRF (152 aa).

The protein belongs to the bacterial exotoxin subunit A family. In terms of assembly, monomer. Binds to host (human) pulmonary surfactant-associated protein A1 (SFTPA1), the major mammalian protein component of pulmonary surfactant. Binds to host (human) surface annexin A2 (ANXA2) on the cell surface; anti-ANXA2 antibodies decrease binding to cells. Interacts with cytosolic host (human) NLRP3, which it ADP-ribosylates in vitro. In terms of processing, 8 hours after treatment of HeLa cells with purified protein, a substantial amount is processed to 2 nearly equal-sized fragments. The disulfide bond between Cys-230 and Cys-247 is required to for the toxin to exert its mART and vacuolating activities within target cells, and for protein processing. Acidic pH in the endosome and retrograde transport are required for toxin cleavage, which is required for both toxin activities. Trypsin treatment under mild conditions leads to cleavage at Lys-305 and Lys-307; the 2 proteins fragments remain associated and can be internalized and vacuolate HeLa cells.

It localises to the cell membrane. The protein localises to the cytoplasm. The protein resides in the cell surface. Its subcellular location is the cell projection. It is found in the attachment organelle. It localises to the host cytoplasm. The protein localises to the host cytosol. The protein resides in the host endoplasmic reticulum. In vitro ADP-ribosylation is enhanced by dithiotheritol. In terms of biological role, the main virulence factor for this bacteria, a mono-ADP-ribosylating toxin (mART), that transfers the ADP-ribosyl group from NAD(+) to multiple target proteins in vitro. Also elicits cytopathic effects in mammalian cells, such as disorganization and disruption of respiratory epithelial integrity in tracheal epithelium and vacuolization in the cytoplasm of CHO and HeLa cells as well as in mice and baboons. Treatment of mice or baboons with CARDS elicits a response that is consistent with human M.pneumoniae infections and mouse models of both infection and intoxication, suggesting that CARDS toxin is sufficient to cause prolonged inflammatory responses and airway dysfunction. Treatment of baboons with CARDS induces a number of cytokines; G-CSF (40 fold), IL-1Ra (10 fold), IL-6 and IL-8 (333 and 100 fold, respectively), MIP-1a (5 fold), and RANTES (9 fold). Treatment of mice gives a similar response. Binds phosphatidyl choline, dipalmitoylphosphatidylcholine (DPPC) and sphingomyelin via domains D2 plus D3. Its function is as follows. Has at least 2 host receptors SFTPA1 and ANXA2. Internalized by a clathrin-mediated process; protein is rapidly taken up at 37 degrees Celsius. Clathrin-independent or caveolin-dependent endocytosis were not detected. In HeLa cells internalized CARDS trafficks toward the nucleus by retrograde transport from early to late endosomes, then the Golgi apparatus; at 16 hours most toxin is concentrated in the perinuclear region in the host endoplasmic reticulum (ER). Failure to localize to the host ER prevents ADP-ribosylation and vacuolization. An acidic compartment is required to mediate retrotransport and processing of toxin into an N-terminal fragment with mART activity and a C-terminal fragment that is able to induce vacuolization. Functionally, induces the host NLRP3 inflammasome to release interleukin-1 beta (IL-1 beta); IL-1 beta release requires ADP-ribosylation activity and uptake by host macrophages. In the host colocalizes with the NLRP3 inflammasome; ADP-ribosylates NLRP3 in vitro. ADP-ribosylation of NLRP3 may lead to hyperinflammation. This Mycoplasma pneumoniae (strain ATCC 29342 / M129 / Subtype 1) (Mycoplasmoides pneumoniae) protein is ADP-ribosylating toxin CARDS.